A 179-amino-acid polypeptide reads, in one-letter code: Serglycin (179 aa).

Residues 1–26 (MRQVPVGTRLVLALAFVLVWGSSVQG) form the signal peptide. Positions 27 to 75 (YPARRARYQWVRCKPDGIFANCIEEKGPRFDLIAEESNVGPPMTDPVLM) are cleaved as a propeptide — activation peptide. A disulfide bond links Cys-39 and Cys-48. The tract at residues 86–145 (SDDYSGSGSGSGSGSGSGSGSGSGSGSGSGSGSGSGSGSGSGSGSGSGSGSGSLADMEWE) is disordered. 2 O-linked (Xyl...) (glycosaminoglycan) serine glycosylation sites follow: Ser-90 and Ser-92. Repeat copies occupy residues 90–91 (SG), 92–93 (SG), 94–95 (SG), 96–97 (SG), 98–99 (SG), 100–101 (SG), 102–103 (SG), 104–105 (SG), 106–107 (SG), 108–109 (SG), 110–111 (SG), 112–113 (SG), 114–115 (SG), 116–117 (SG), 118–119 (SG), 120–121 (SG), 122–123 (SG), 124–125 (SG), 126–127 (SG), 128–129 (SG), 130–131 (SG), 132–133 (SG), 134–135 (SG), and 136–137 (SG). Positions 90 to 137 (SGSGSGSGSGSGSGSGSGSGSGSGSGSGSGSGSGSGSGSGSGSGSGSG) are 24 X 2 AA tandem repeats of S-G. Residues 92–136 (SGSGSGSGSGSGSGSGSGSGSGSGSGSGSGSGSGSGSGSGSGSGS) are compositionally biased toward gly residues. Residues Ser-96, Ser-98, Ser-100, Ser-102, Ser-104, and Ser-106 are each glycosylated (O-linked (Xyl...) (glycosaminoglycan) serine).

The protein belongs to the serglycin family. As to quaternary structure, binds to activated CD44 and to GZMB. O-glycosylated; contains chondroitin sulfate and heparan sulfate.

It localises to the cytoplasmic granule. It is found in the cytolytic granule. The protein localises to the secreted. The protein resides in the extracellular space. Its subcellular location is the golgi apparatus. In terms of biological role, plays a role in formation of mast cell secretory granules and mediates storage of various compounds in secretory vesicles. Required for storage of some proteases in both connective tissue and mucosal mast cells and for storage of granzyme B in T-lymphocytes. Plays a role in localizing neutrophil elastase in azurophil granules of neutrophils. Mediates processing of MMP2. Plays a role in cytotoxic cell granule-mediated apoptosis by forming a complex with granzyme B which is delivered to cells by perforin to induce apoptosis. Regulates the secretion of TNF-alpha and may also regulate protease secretion. Inhibits bone mineralization. This is Serglycin (Srgn) from Rattus norvegicus (Rat).